A 115-amino-acid polypeptide reads, in one-letter code: Large ribosomal subunit protein bL20 (115 aa).

It belongs to the bacterial ribosomal protein bL20 family.

Binds directly to 23S ribosomal RNA and is necessary for the in vitro assembly process of the 50S ribosomal subunit. It is not involved in the protein synthesizing functions of that subunit. The chain is Large ribosomal subunit protein bL20 from Bdellovibrio bacteriovorus (strain ATCC 15356 / DSM 50701 / NCIMB 9529 / HD100).